A 207-amino-acid polypeptide reads, in one-letter code: dTTP/UTP pyrophosphatase (207 aa).

Aspartate 79 (proton acceptor) is an active-site residue.

This sequence belongs to the Maf family. YhdE subfamily. Requires a divalent metal cation as cofactor.

It is found in the cytoplasm. The enzyme catalyses dTTP + H2O = dTMP + diphosphate + H(+). It carries out the reaction UTP + H2O = UMP + diphosphate + H(+). Its function is as follows. Nucleoside triphosphate pyrophosphatase that hydrolyzes dTTP and UTP. May have a dual role in cell division arrest and in preventing the incorporation of modified nucleotides into cellular nucleic acids. This chain is dTTP/UTP pyrophosphatase, found in Rhodopseudomonas palustris (strain ATCC BAA-98 / CGA009).